The chain runs to 321 residues: PI-PLC X domain-containing protein 3 (321 aa).

In terms of domain architecture, PI-PLC X-box spans 22 to 197 (SIHSIPLTNL…DYQVLVFYHS (176 aa)). Catalysis depends on residues H37 and H114.

In Bos taurus (Bovine), this protein is PI-PLC X domain-containing protein 3 (PLCXD3).